Here is a 318-residue protein sequence, read N- to C-terminus: Cis-3-alkyl-4-alkyloxetan-2-one decarboxylase (318 aa).

The 246-residue stretch at 30-275 (PVVMVHGNPS…ADCGHYILED (246 aa)) folds into the AB hydrolase-1 domain.

This sequence belongs to the AB hydrolase superfamily.

It catalyses the reaction a cis-3-alkyl-4-alkyloxetan-2-one = a cis-alkene + CO2. Its function is as follows. Involved in olefin biosynthesis. Catalyzes the elimination of carbon dioxide from beta-lactones to form the final olefin product. The S.oneidensis oleABCD genes produce 3,6,9,12,15,19,22,25,28-hentriacontanonaene, which may aid the cells in adapting to a sudden drop in temperature. The polypeptide is Cis-3-alkyl-4-alkyloxetan-2-one decarboxylase (Shewanella oneidensis (strain ATCC 700550 / JCM 31522 / CIP 106686 / LMG 19005 / NCIMB 14063 / MR-1)).